The primary structure comprises 234 residues: MGAQWKVKHKEAAANAKGKIFGKLVKEITIAARNGADTATNAHLRLVVEQAKKASMPRETLERAIKKGSGQLGETVQYHRVTYEGFAPHQVPLIVECVTDNINRTVAEIRVAFRKGQLGASGSVSWDFNHVGMIEASPDSPDADPELAAIEAGAQDFEPGEEGATLFLTEPADLDAVQKALPEQGFTVLSAKLGYQPKNPVSGLSDEQMAEVEAFLEGLDNHDDVQDMFVGLAG.

It belongs to the TACO1 family.

The protein localises to the cytoplasm. This is Probable transcriptional regulatory protein PFL_3960 from Pseudomonas fluorescens (strain ATCC BAA-477 / NRRL B-23932 / Pf-5).